Reading from the N-terminus, the 427-residue chain is MSRSEALFAQAQKHIPGGVNSPVRAFKSVGGTPLFFKHAEGAYVIDEDDKRYVDYVGSWGPMILGHGHPEVLDAVRNQLQHGLSYGAPTAMETEMADLVCSIVPSMEMVRMVSSGTEATMSAIRLARGYTGRDAIIKFEGCYHGHSDSLLVKAGSGLLTQGVPSSAGVPADFAKHTLTLPFNDIAAVEKTLAEVGQTVACIIVEPVAGNMNCVPPAPGFLEGLREQCDKHGVVLIFDEVMTGFRVSLGGAQGYYGITPDLSTFGKIVGGGMPVGCFGGKREIMGCIAPLGPVYQAGTLSGNPLAMAAGLTTLKLISRPGFHDELTAFTSRMLDGLQQRADAAGVPFVTTQAGAMFGLYFSGADDIVTFDDVMASDAERFKRFFHLMLEGGVYLAPSAFEAGFTSIAHGDKELQITLDAAERAFAKLK.

K265 is modified (N6-(pyridoxal phosphate)lysine).

It belongs to the class-III pyridoxal-phosphate-dependent aminotransferase family. HemL subfamily. Homodimer. The cofactor is pyridoxal 5'-phosphate.

The protein localises to the cytoplasm. It carries out the reaction (S)-4-amino-5-oxopentanoate = 5-aminolevulinate. It participates in porphyrin-containing compound metabolism; protoporphyrin-IX biosynthesis; 5-aminolevulinate from L-glutamyl-tRNA(Glu): step 2/2. The sequence is that of Glutamate-1-semialdehyde 2,1-aminomutase from Pseudomonas entomophila (strain L48).